Reading from the N-terminus, the 218-residue chain is Small ribosomal subunit protein uS3c (218 aa).

A KH type-2 domain is found at 39 to 109; the sequence is IRNYVKVNLS…QIRINVTELK (71 aa).

This sequence belongs to the universal ribosomal protein uS3 family. Part of the 30S ribosomal subunit.

The protein localises to the plastid. Its subcellular location is the chloroplast. This is Small ribosomal subunit protein uS3c (rps3) from Rhodomonas salina (Cryptomonas salina).